Here is a 1326-residue protein sequence, read N- to C-terminus: Paired amphipathic helix protein Sin3-like 4 (1326 aa).

PAH domains lie at 8 to 78 (QKLT…LPKG), 95 to 165 (KPVE…LPDT), and 292 to 367 (IPSS…LAQC). Disordered regions lie at residues 272–299 (DDDSAEMSDQAREGDKFSGAIPSSSTYD), 715–812 (VPSR…RAET), 844–864 (SVAGLSNSNPKPALTSGTEEL), and 927–1000 (SKSK…EGDM). Over residues 721 to 737 (GAEDREDAVKSTNHDRE) the composition is skewed to basic and acidic residues. Composition is skewed to polar residues over residues 744–757 (SPQNGASIANSMRS), 781–805 (SSKTSDALLSCDNTQNDKMPKNLTT), 844–861 (SVAGLSNSNPKPALTSGT), and 942–961 (PRSSDGSGNTSHNGDVSGTD). A compositionally biased stretch (basic and acidic residues) spans 967–981 (DCYREDDIDHNKVES).

It localises to the nucleus. In terms of biological role, acts as a transcriptional repressor. Plays roles in regulating gene expression and genome stability. The sequence is that of Paired amphipathic helix protein Sin3-like 4 (SNL4) from Arabidopsis thaliana (Mouse-ear cress).